The primary structure comprises 257 residues: UPF0246 protein A1S_2267 (257 aa).

Belongs to the UPF0246 family.

The sequence is that of UPF0246 protein A1S_2267 from Acinetobacter baumannii (strain ATCC 17978 / DSM 105126 / CIP 53.77 / LMG 1025 / NCDC KC755 / 5377).